A 1378-amino-acid chain; its full sequence is Protein CLASP-1 (1378 aa).

One copy of the HEAT 1 repeat lies at 168–206; it reads LIPQLCRLTNDPNSEVRDVSTQCLIDLMVYGGKPIVAKI. Disordered regions lie at residues 231 to 254, 266 to 325, and 590 to 725; these read RGDL…RNSL, IHPS…TRSS, and MLRD…HQTP. Low complexity-rich tracts occupy residues 269–283 and 610–619; these read SAST…RLST and NQKQQPNQQN. Composition is skewed to polar residues over residues 620–630 and 637–648; these read ISQKFLSQRSA and IQLSVKPQTTAI. The segment covering 664–676 has biased composition (low complexity); sequence SSTSTSFSAVRSS. The span at 677–690 shows a compositional bias: polar residues; the sequence is GYGQNQSTTPNRAK. The span at 704-721 shows a compositional bias: low complexity; it reads TNGNNNNKSSSSSPSTST. Residues 740–767 are a coiled coil; sequence ASLTQEQANCLQNAMNTAKDEMSKNNED. Positions 775–784 are enriched in basic and acidic residues; that stretch reads IRKTPPKEVP. The interval 775-823 is disordered; that stretch reads IRKTPPKEVPRSYNNSPFKPSNLDSSVHRSYNNNSPFRPSSGSVGSGSN. Over residues 786 to 812 the composition is skewed to polar residues; the sequence is SYNNSPFKPSNLDSSVHRSYNNNSPFR. Residues 1305-1341 form an HEAT 2 repeat; sequence HLIVNDVAPCFVTAYESMSSTVRKCAVFGLVALVQRV.

This sequence belongs to the CLASP family.

Its subcellular location is the cytoplasm. The protein localises to the cytoskeleton. Its function is as follows. Microtubule plus-end tracking protein that promotes the stabilization of dynamic microtubules. Operates redundantly with cls-2 and cls-3 in regulating microtubule processes which position the spindle during asymmetric cell division. The protein is Protein CLASP-1 (cls-1) of Caenorhabditis elegans.